The following is a 227-amino-acid chain: Cytochrome c biogenesis ATP-binding export protein CcmA (227 aa).

The 202-residue stretch at 26 to 227 (LAASGLGFSR…ARTLRLDARS (202 aa)) folds into the ABC transporter domain. 58 to 65 (GANGSGKT) is an ATP binding site.

It belongs to the ABC transporter superfamily. CcmA exporter (TC 3.A.1.107) family. As to quaternary structure, the complex is composed of two ATP-binding proteins (CcmA) and two transmembrane proteins (CcmB).

It localises to the cell inner membrane. It catalyses the reaction heme b(in) + ATP + H2O = heme b(out) + ADP + phosphate + H(+). Functionally, part of the ABC transporter complex CcmAB involved in the biogenesis of c-type cytochromes; once thought to export heme, this seems not to be the case, but its exact role is uncertain. Responsible for energy coupling to the transport system. This is Cytochrome c biogenesis ATP-binding export protein CcmA from Cupriavidus necator (strain ATCC 17699 / DSM 428 / KCTC 22496 / NCIMB 10442 / H16 / Stanier 337) (Ralstonia eutropha).